The sequence spans 323 residues: Phospho-N-acetylmuramoyl-pentapeptide-transferase (323 aa).

9 consecutive transmembrane segments (helical) span residues 12 to 32 (IVMAIVISFIVASILGPIIIP), 58 to 78 (PTIGGLIFIFATIITMFVMVG), 84 to 104 (AMIALYSFVGFGFVGFLDDLL), 120 to 140 (MILLLIISGFLTWYAYKYIGT), 151 to 171 (INLGLFYIPAAMFYFAGVTNA), 177 to 197 (GLDGLATSVTVLVTTFLGIIS), 200 to 220 (LGHISLAIFCVALAGALLAFL), 229 to 250 (VFMGDTGSLALGGAVAMVALIL), and 303 to 323 (KIVSVFSIITVVFCFIAFASL).

Belongs to the glycosyltransferase 4 family. MraY subfamily. Mg(2+) serves as cofactor.

It is found in the cell membrane. The catalysed reaction is UDP-N-acetyl-alpha-D-muramoyl-L-alanyl-gamma-D-glutamyl-meso-2,6-diaminopimeloyl-D-alanyl-D-alanine + di-trans,octa-cis-undecaprenyl phosphate = di-trans,octa-cis-undecaprenyl diphospho-N-acetyl-alpha-D-muramoyl-L-alanyl-D-glutamyl-meso-2,6-diaminopimeloyl-D-alanyl-D-alanine + UMP. The protein operates within cell wall biogenesis; peptidoglycan biosynthesis. Catalyzes the initial step of the lipid cycle reactions in the biosynthesis of the cell wall peptidoglycan: transfers peptidoglycan precursor phospho-MurNAc-pentapeptide from UDP-MurNAc-pentapeptide onto the lipid carrier undecaprenyl phosphate, yielding undecaprenyl-pyrophosphoryl-MurNAc-pentapeptide, known as lipid I. The chain is Phospho-N-acetylmuramoyl-pentapeptide-transferase from Clostridium perfringens (strain SM101 / Type A).